We begin with the raw amino-acid sequence, 47 residues long: Large ribosomal subunit protein uL14c (47 aa).

It belongs to the universal ribosomal protein uL14 family. Part of the 50S ribosomal subunit.

The protein localises to the plastid. The protein resides in the chloroplast. In terms of biological role, binds to 23S rRNA. This Vigna unguiculata (Cowpea) protein is Large ribosomal subunit protein uL14c (rpl14).